A 303-amino-acid chain; its full sequence is tRNA pseudouridine synthase B (303 aa).

Asp47 (nucleophile) is an active-site residue.

It belongs to the pseudouridine synthase TruB family. Type 1 subfamily.

The enzyme catalyses uridine(55) in tRNA = pseudouridine(55) in tRNA. Responsible for synthesis of pseudouridine from uracil-55 in the psi GC loop of transfer RNAs. The protein is tRNA pseudouridine synthase B of Legionella pneumophila (strain Lens).